The sequence spans 848 residues: Dynein axonemal intermediate chain 4 (848 aa).

2 disordered regions span residues 345–370 (SKANVLPKDQDQRLPGSTTEKNSETS) and 431–464 (EPEPEEPEDVLESAKHEEVEEESKKEEEEEIHAE). Polar residues predominate over residues 359-370 (PGSTTEKNSETS). Positions 442 to 456 (ESAKHEEVEEESKKE) are enriched in basic and acidic residues. 6 WD repeats span residues 534-574 (QSPY…NVPV), 583-631 (KHLG…DCYD), 658-698 (SRQA…QYLD), 702-742 (GHKG…PSLS), 745-784 (PATSVVYDVAWSPKSSYIFAAANENRVEIWDLHISTLDPL), and 790-829 (NPGIKFTTILFAKQTDCLLVGDSDGQVSVYELRNMPTVLE).

In terms of assembly, part of the multisubunit axonemal dynein complex formed at least of two heavy chains and a number of intermediate and light chains. Associated with axonemal dynein subunits such as, DNAH2, DNAI3, and DYNLT1. Interacts with DYNLT1.

It is found in the cytoplasm. It localises to the cytoskeleton. The protein resides in the flagellum axoneme. The protein localises to the cilium axoneme. Its subcellular location is the dynein axonemal particle. Its function is as follows. Plays a critical role in the assembly of axonemal dynein complex, thereby playing a role in ciliary motility. The sequence is that of Dynein axonemal intermediate chain 4 from Homo sapiens (Human).